Here is a 353-residue protein sequence, read N- to C-terminus: ATPase GET3A (353 aa).

Lysine 27 to threonine 34 lines the ATP pocket. Aspartate 56 is a catalytic residue. ATP contacts are provided by glutamate 226 and asparagine 253. A coiled-coil region spans residues threonine 320–glycine 353.

It belongs to the arsA ATPase family. As to quaternary structure, homodimer. Interacts with GET1 and GET4.

The protein resides in the cytoplasm. It is found in the cytosol. Its subcellular location is the endoplasmic reticulum. It catalyses the reaction ATP + H2O = ADP + phosphate + H(+). Functionally, ATPase required for the post-translational delivery of tail-anchored (TA) proteins to the endoplasmic reticulum. Recognizes and selectively binds the transmembrane domain of TA proteins in the cytosol. This complex then targets to the endoplasmic reticulum by membrane-bound receptors, where the tail-anchored protein is released for insertion. This process is regulated by ATP binding and hydrolysis. ATP binding drives the homodimer towards the closed dimer state, facilitating recognition of newly synthesized TA membrane proteins. ATP hydrolysis is required for insertion. Subsequently, the homodimer reverts towards the open dimer state, lowering its affinity for the membrane-bound receptor, and returning it to the cytosol to initiate a new round of targeting. Involved in the control of root hair growth through the regulation of syntaxin SYP123 expression. In Arabidopsis thaliana (Mouse-ear cress), this protein is ATPase GET3A.